The chain runs to 128 residues: 3-aminoacrylate deaminase RutC (128 aa).

It belongs to the RutC family. In terms of assembly, homotrimer.

The enzyme catalyses (Z)-3-aminoacrylate + H2O + H(+) = 3-oxopropanoate + NH4(+). Functionally, involved in pyrimidine catabolism. Catalyzes the deamination of 3-aminoacrylate to malonic semialdehyde, a reaction that can also occur spontaneously. RutC may facilitate the reaction and modulate the metabolic fitness, rather than catalyzing essential functions. This is 3-aminoacrylate deaminase RutC from Escherichia coli O157:H7.